The chain runs to 368 residues: 1-deoxy-D-xylulose 5-phosphate reductoisomerase (368 aa).

Residues Thr10, Gly11, Ser12, Ile13, Gln38, and Asn100 each contribute to the NADPH site. Lys101 contributes to the 1-deoxy-D-xylulose 5-phosphate binding site. Glu102 lines the NADPH pocket. Residue Asp125 participates in Mn(2+) binding. 1-deoxy-D-xylulose 5-phosphate contacts are provided by Ser126, Glu127, Ser151, and His172. Position 127 (Glu127) interacts with Mn(2+). NADPH is bound at residue Gly178. The 1-deoxy-D-xylulose 5-phosphate site is built by Ser185, Asn190, Lys191, and Glu194. Residue Glu194 coordinates Mn(2+).

This sequence belongs to the DXR family. It depends on Mg(2+) as a cofactor. The cofactor is Mn(2+).

The catalysed reaction is 2-C-methyl-D-erythritol 4-phosphate + NADP(+) = 1-deoxy-D-xylulose 5-phosphate + NADPH + H(+). Its pathway is isoprenoid biosynthesis; isopentenyl diphosphate biosynthesis via DXP pathway; isopentenyl diphosphate from 1-deoxy-D-xylulose 5-phosphate: step 1/6. Its function is as follows. Catalyzes the NADPH-dependent rearrangement and reduction of 1-deoxy-D-xylulose-5-phosphate (DXP) to 2-C-methyl-D-erythritol 4-phosphate (MEP). This is 1-deoxy-D-xylulose 5-phosphate reductoisomerase from Tropheryma whipplei (strain TW08/27) (Whipple's bacillus).